A 1091-amino-acid chain; its full sequence is Voltage-dependent calcium channel subunit alpha-2/delta-1 (1091 aa).

Positions M1–E24 are cleaved as a signal peptide. At E25–G1061 the chain is on the extracellular side. N-linked (GlcNAc...) asparagine glycosylation is present at N92. Phosphoserine is present on S119. N-linked (GlcNAc...) asparagine glycans are attached at residues N136 and N184. Residues D252 to L429 enclose the VWFA domain. D258, S260, and S262 together coordinate a divalent metal cation. Residues D258–S262 carry the MIDAS-like motif motif. 2 N-linked (GlcNAc...) asparagine glycosylation sites follow: N323 and N347. C403 and C1047 are disulfide-bonded. Positions W445–P536 constitute a Cache domain. 4 N-linked (GlcNAc...) asparagine glycosylation sites follow: N593, N769, N876, and N973. Residues V1062–L1082 form a helical membrane-spanning segment. Topologically, residues V1083 to W1091 are cytoplasmic.

It belongs to the calcium channel subunit alpha-2/delta family. Dimer formed of alpha-2-1 and delta-1 chains; disulfide-linked. Voltage-dependent calcium channels are multisubunit complexes, consisting of alpha-1 (CACNA1), alpha-2 (CACNA2D), beta (CACNB) and delta (CACNA2D) subunits in a 1:1:1:1 ratio. In terms of processing, proteolytically processed into subunits alpha-2-1 and delta-1 that are disulfide-linked.

Its subcellular location is the membrane. The protein localises to the cell membrane. The alpha-2/delta subunit of voltage-dependent calcium channels regulates calcium current density and activation/inactivation kinetics of the calcium channel. Plays an important role in excitation-contraction coupling. The protein is Voltage-dependent calcium channel subunit alpha-2/delta-1 (Cacna2d1) of Rattus norvegicus (Rat).